The primary structure comprises 190 residues: Xanthine phosphoribosyltransferase (190 aa).

2 residues coordinate xanthine: leucine 20 and asparagine 27. 128 to 132 (ANGHA) provides a ligand contact to 5-phospho-alpha-D-ribose 1-diphosphate. Lysine 156 is a xanthine binding site.

This sequence belongs to the purine/pyrimidine phosphoribosyltransferase family. Xpt subfamily. Homodimer.

The protein localises to the cytoplasm. The catalysed reaction is XMP + diphosphate = xanthine + 5-phospho-alpha-D-ribose 1-diphosphate. The protein operates within purine metabolism; XMP biosynthesis via salvage pathway; XMP from xanthine: step 1/1. Functionally, converts the preformed base xanthine, a product of nucleic acid breakdown, to xanthosine 5'-monophosphate (XMP), so it can be reused for RNA or DNA synthesis. This is Xanthine phosphoribosyltransferase from Pseudomonas aeruginosa (strain LESB58).